A 484-amino-acid polypeptide reads, in one-letter code: Sulfoacetaldehyde dehydrogenase (484 aa).

NAD(+) contacts are provided by residues 105–110 (LTPVTN), G188, and G206. Catalysis depends on C239, which acts as the Nucleophile. E332 and L412 together coordinate NAD(+).

Belongs to the aldehyde dehydrogenase family.

It carries out the reaction sulfoacetaldehyde + NAD(+) + CoA = sulfoacetyl-CoA + NADH + H(+). Its function is as follows. Part of a variant of the sulfo-TK pathway, a D-sulfoquinovose degradation pathway that produces sulfoacetate. Catalyzes the oxidation of sulfoacetaldehyde (SA) to sulfoacetyl-coenzyme A (sulfoacetyl-CoA). Is highly specific for NAD(+), with only residual (1%) activity with NADP(+). Cannot use acetaldehyde. The chain is Sulfoacetaldehyde dehydrogenase from Acholeplasma sp.